We begin with the raw amino-acid sequence, 821 residues long: Probable phosphoenolpyruvate synthase (821 aa).

Catalysis depends on histidine 444, which acts as the Tele-phosphohistidine intermediate. Positions 543, 590, 687, 709, 710, 711, and 712 each coordinate substrate. Glutamate 687 contributes to the Mg(2+) binding site. Aspartate 712 lines the Mg(2+) pocket. Cysteine 759 serves as the catalytic Proton donor.

It belongs to the PEP-utilizing enzyme family. Requires Mg(2+) as cofactor.

The catalysed reaction is pyruvate + ATP + H2O = phosphoenolpyruvate + AMP + phosphate + 2 H(+). Its pathway is carbohydrate biosynthesis; gluconeogenesis. Its function is as follows. Catalyzes the phosphorylation of pyruvate to phosphoenolpyruvate. The chain is Probable phosphoenolpyruvate synthase (ppsA) from Pyrococcus horikoshii (strain ATCC 700860 / DSM 12428 / JCM 9974 / NBRC 100139 / OT-3).